We begin with the raw amino-acid sequence, 346 residues long: Peripherin-2 (346 aa).

Residues 1–24 (MALLKVKFDQKKRVKLAQGLWLMN) lie on the Cytoplasmic side of the membrane. A helical transmembrane segment spans residues 25-43 (WLSVLAGIVLFSLGLFLKI). The Lumenal portion of the chain corresponds to 44 to 61 (ELRKRSEVMNNSESHFVP). Residue Asn53 is glycosylated (N-linked (GlcNAc...) asparagine). The helical transmembrane segment at 62–80 (NSLIGVGVLSCVFNSLAGK) threads the bilayer. Over 81 to 99 (ICYDALDPAKYAKWKPWLK) the chain is Cytoplasmic. Residues 100–123 (PYLAVCIFFNVILFLVALCCFLLR) form a helical membrane-spanning segment. Over 124–264 (GSLESTLAYG…LNYYSSLMNS (141 aa)) the chain is Lumenal. N-linked (GlcNAc...) asparagine glycosylation is present at Asn229. A helical transmembrane segment spans residues 265–290 (MGVVTLLVWLFEVSITAGLRYLHTAL). At 291 to 346 (ESVSNPEDPECESEGWLLEKSVPETWKAFLESFKKLGKSNQVEAEGADAGPAPEAG) the chain is on the cytoplasmic side. Residues 341-346 (PAPEAG) are interaction with MREG.

Belongs to the PRPH2/ROM1 family. In terms of assembly, homodimer; disulfide-linked. Forms a homotetramer. Forms a heterotetramer with ROM1. Homotetramer and heterotetramer core complexes go on to form higher order complexes by formation of intermolecular disulfide bonds. Interacts with MREG. Interacts with STX3 isoform 3B. Interacts with SNAP25. As to expression, expressed in the retina (at protein level).

It localises to the membrane. Its subcellular location is the cell projection. The protein resides in the cilium. It is found in the photoreceptor outer segment. The protein localises to the photoreceptor inner segment. Essential for retina photoreceptor outer segment disk morphogenesis, may also play a role with ROM1 in the maintenance of outer segment disk structure. Required for the maintenance of retinal outer nuclear layer thickness. Required for the correct development and organization of the photoreceptor inner segment. This chain is Peripherin-2 (Prph2), found in Mus musculus (Mouse).